Reading from the N-terminus, the 254-residue chain is Fructose-1,6-bisphosphatase (254 aa).

Positions 68, 84, 86, and 87 each coordinate Mg(2+). Substrate contacts are provided by residues 87–89 (DGS), Arg171, Ile176, and Arg195. Mg(2+) is bound at residue Asp202.

It belongs to the inositol monophosphatase superfamily. FBPase class 4 family. Homodimer. Mg(2+) serves as cofactor.

It carries out the reaction beta-D-fructose 1,6-bisphosphate + H2O = beta-D-fructose 6-phosphate + phosphate. Inhibited by Li(+), ADP, ATP and glucose-6-phosphate. Catalyzes the conversion of D-fructose 1,6-bisphosphate to D-fructose 6-phosphate. In vitro, also has weak activity with inositol-1-phosphate, glucose-1-phosphate and glycerol-2-phosphate. The polypeptide is Fructose-1,6-bisphosphatase (Pyrococcus furiosus (strain ATCC 43587 / DSM 3638 / JCM 8422 / Vc1)).